The following is a 118-amino-acid chain: Small ribosomal subunit protein uS13 (118 aa).

Residues 92–118 (RRSLPVRGQRTKTNARTRKGPRKPIKK) form a disordered region.

Belongs to the universal ribosomal protein uS13 family. Part of the 30S ribosomal subunit. Forms a loose heterodimer with protein S19. Forms two bridges to the 50S subunit in the 70S ribosome.

Functionally, located at the top of the head of the 30S subunit, it contacts several helices of the 16S rRNA. In the 70S ribosome it contacts the 23S rRNA (bridge B1a) and protein L5 of the 50S subunit (bridge B1b), connecting the 2 subunits; these bridges are implicated in subunit movement. Contacts the tRNAs in the A and P-sites. The sequence is that of Small ribosomal subunit protein uS13 from Acinetobacter baylyi (strain ATCC 33305 / BD413 / ADP1).